An 890-amino-acid chain; its full sequence is Translation initiation factor IF-2 (890 aa).

2 disordered regions span residues 31 to 164 (KLAQ…PAEP) and 189 to 266 (FKAP…ESLK). Positions 42–54 (SSSEKPSAKEKSV) are enriched in basic and acidic residues. A compositionally biased stretch (low complexity) spans 55-72 (KVALAATSTPTASAEQAS). Positions 114–128 (PEPELEVVDEVCDES) are enriched in acidic residues. 2 stretches are compositionally biased toward basic and acidic residues: residues 149-163 (PQEK…KPAE) and 242-266 (PKRD…ESLK). The tr-type G domain occupies 395-564 (IRSPIVAFMG…ALQAEVLELK (170 aa)). The segment at 404–411 (GHVDHGKT) is G1. 404 to 411 (GHVDHGKT) provides a ligand contact to GTP. The interval 429 to 433 (AITQH) is G2. Positions 450 to 453 (DTPG) are G3. Residues 450–454 (DTPGH) and 504–507 (NKCD) each bind GTP. Residues 504 to 507 (NKCD) form a G4 region. The segment at 540–542 (SAK) is G5.

It belongs to the TRAFAC class translation factor GTPase superfamily. Classic translation factor GTPase family. IF-2 subfamily.

The protein localises to the cytoplasm. One of the essential components for the initiation of protein synthesis. Protects formylmethionyl-tRNA from spontaneous hydrolysis and promotes its binding to the 30S ribosomal subunits. Also involved in the hydrolysis of GTP during the formation of the 70S ribosomal complex. The protein is Translation initiation factor IF-2 (infB) of Chlamydia pneumoniae (Chlamydophila pneumoniae).